The sequence spans 145 residues: 3-hydroxyacyl-[acyl-carrier-protein] dehydratase FabZ (145 aa).

Residue H50 is part of the active site.

It belongs to the thioester dehydratase family. FabZ subfamily.

It localises to the cytoplasm. The enzyme catalyses a (3R)-hydroxyacyl-[ACP] = a (2E)-enoyl-[ACP] + H2O. Involved in unsaturated fatty acids biosynthesis. Catalyzes the dehydration of short chain beta-hydroxyacyl-ACPs and long chain saturated and unsaturated beta-hydroxyacyl-ACPs. The protein is 3-hydroxyacyl-[acyl-carrier-protein] dehydratase FabZ of Coxiella burnetii (strain CbuK_Q154) (Coxiella burnetii (strain Q154)).